The sequence spans 62 residues: Phyllokinin-1 (62 aa).

The first 19 residues, 1–19 (MSFLKKSLFLVLFLGLVSS), serve as a signal peptide directing secretion. Positions 20-48 (SICEEEKRETEEEENEDEIEEESEEKKRE) are excised as a propeptide. The disordered stretch occupies residues 22-62 (CEEEKRETEEEENEDEIEEESEEKKREDPERPPGFTPFRVY). Residues 30–42 (EEEENEDEIEEES) are compositionally biased toward acidic residues. Basic and acidic residues predominate over residues 43 to 52 (EEKKREDPER). Tyr62 is subject to Sulfotyrosine; partial.

Belongs to the frog skin active peptide (FSAP) family. Bradykinin-related peptide subfamily. Post-translationally, asp,Pro,Glu-[Thr6,Val10]-phyllokinin and [Thr6,Val10]-phyllokinin occur in sulfated and nonsulfated forms. [Thr6]-bradykinin and Des-Arg-[Thr6]-bradykinin are nonsulfated. Expressed by the skin glands.

It is found in the secreted. Its function is as follows. Inhibits ACE with a Ki of 1.6 uM, and targets B2 bradykinin receptor (BDKRB2). Provokes contraction of smooth muscle preparation (ileum). In vivo, induces an early hyperalgesic effects in living rats after intraplantar injection. This Pithecopus azureus (Orange-legged monkey tree frog) protein is Phyllokinin-1.